The sequence spans 581 residues: Peptidyl-prolyl cis-trans isomerase FKBP10 (581 aa).

Positions 1–33 (MFLVGSSSHTLHRLRILPLLLLLQTLERGLGRA) are cleaved as a signal peptide. PPIase FKBP-type domains are found at residues 61–149 (GDFV…LDVW), 173–261 (SDFV…LDVH), and 285–373 (GDFM…IDFH). N-linked (GlcNAc...) asparagine glycosylation is found at asparagine 69, asparagine 181, asparagine 293, asparagine 309, asparagine 351, asparagine 392, and asparagine 406. In terms of domain architecture, PPIase FKBP-type 4 spans 398–485 (GDFIRYHYNC…LFEVELVSRE (88 aa)). EF-hand domains follow at residues 496–531 (WYQD…QVNE) and 541–576 (DPDK…DQER). Ca(2+) is bound by residues aspartate 509, asparagine 511, aspartate 513, glutamate 515, glutamate 520, aspartate 554, asparagine 556, aspartate 558, lysine 560, and glutamate 565. The interval 533 to 581 (KGRLMPGQDPDKTISDMFQNQDRNQDGKITAEELKLKSDEDQERVHEEL) is disordered. A compositionally biased stretch (basic and acidic residues) spans 555–581 (RNQDGKITAEELKLKSDEDQERVHEEL). The Prevents secretion from ER signature appears at 578 to 581 (HEEL).

N-glycosylated. Post-translationally, phosphorylated. As to expression, expressed in aorta, brain, heart, kidney, lung, spleen and testis. Not detected in liver.

The protein localises to the endoplasmic reticulum lumen. It carries out the reaction [protein]-peptidylproline (omega=180) = [protein]-peptidylproline (omega=0). Its activity is regulated as follows. Inhibited by both FK506 and rapamycin, but not by cyclosporin A. PPIases accelerate the folding of proteins during protein synthesis. In Mus musculus (Mouse), this protein is Peptidyl-prolyl cis-trans isomerase FKBP10 (Fkbp10).